A 359-amino-acid polypeptide reads, in one-letter code: 4-hydroxy-3-methylbut-2-en-1-yl diphosphate synthase (flavodoxin) (359 aa).

Cys-263, Cys-266, Cys-298, and Glu-305 together coordinate [4Fe-4S] cluster.

This sequence belongs to the IspG family. The cofactor is [4Fe-4S] cluster.

The catalysed reaction is (2E)-4-hydroxy-3-methylbut-2-enyl diphosphate + oxidized [flavodoxin] + H2O + 2 H(+) = 2-C-methyl-D-erythritol 2,4-cyclic diphosphate + reduced [flavodoxin]. Its pathway is isoprenoid biosynthesis; isopentenyl diphosphate biosynthesis via DXP pathway; isopentenyl diphosphate from 1-deoxy-D-xylulose 5-phosphate: step 5/6. Functionally, converts 2C-methyl-D-erythritol 2,4-cyclodiphosphate (ME-2,4cPP) into 1-hydroxy-2-methyl-2-(E)-butenyl 4-diphosphate. The sequence is that of 4-hydroxy-3-methylbut-2-en-1-yl diphosphate synthase (flavodoxin) from Wolinella succinogenes (strain ATCC 29543 / DSM 1740 / CCUG 13145 / JCM 31913 / LMG 7466 / NCTC 11488 / FDC 602W) (Vibrio succinogenes).